The sequence spans 248 residues: MEQTRKIPNQPLPTPTSQSKKRRTPLLSFLSKVSWKLRLQKRELLKNALFVLAERARDPNAKKRHLAMRGLGALAREAPDKQVRKYKKVMLDLLVRGLYDPVSSEVIHESVKTLTIMLGKIQGHGLGSFFIDITLQARTLLDDEDDSVRYSAFVLFGQLASFAGWRWKKFFTQQVNQTQDSLLGHLQDESPKVAKACKMTVRACVPYLKPRKVPSFQSEEEQKNHRLSRQLSHCHPEILLFFYANKIL.

Residues M1–R23 form a disordered region. An HEAT repeat occupies S128 to A163.

Prominent expression seen in testis, brain, liver and heart. Weakly expressed in the kidney.

It localises to the nucleus. The protein resides in the nucleolus. This chain is Protein maestro (Mro), found in Mus musculus (Mouse).